Here is a 268-residue protein sequence, read N- to C-terminus: NH(3)-dependent NAD(+) synthetase (268 aa).

45–52 (GLSGGIDS) is an ATP binding site. Asp-51 serves as a coordination point for Mg(2+). Arg-129 is a deamido-NAD(+) binding site. Residue Thr-149 participates in ATP binding. Glu-154 lines the Mg(2+) pocket. Deamido-NAD(+)-binding residues include Lys-162 and Asp-169. Positions 178 and 200 each coordinate ATP. 260–261 (HK) serves as a coordination point for deamido-NAD(+).

It belongs to the NAD synthetase family. Homodimer.

The enzyme catalyses deamido-NAD(+) + NH4(+) + ATP = AMP + diphosphate + NAD(+) + H(+). It functions in the pathway cofactor biosynthesis; NAD(+) biosynthesis; NAD(+) from deamido-NAD(+) (ammonia route): step 1/1. Functionally, catalyzes the ATP-dependent amidation of deamido-NAD to form NAD. Uses ammonia as a nitrogen source. The protein is NH(3)-dependent NAD(+) synthetase of Halobacterium salinarum (strain ATCC 29341 / DSM 671 / R1).